The chain runs to 101 residues: MKTKLKIGDSVKILSGKDKGRIGKIASINRKKNKVIVESCNMVKKVIKARTPQEKGKIIDKEAAIDISNVIIFIKGTSSRLGIRFENNEKIRYLKKNGQRI.

This sequence belongs to the universal ribosomal protein uL24 family. Part of the 50S ribosomal subunit.

Its function is as follows. One of two assembly initiator proteins, it binds directly to the 5'-end of the 23S rRNA, where it nucleates assembly of the 50S subunit. In terms of biological role, one of the proteins that surrounds the polypeptide exit tunnel on the outside of the subunit. The chain is Large ribosomal subunit protein uL24 from Borrelia garinii subsp. bavariensis (strain ATCC BAA-2496 / DSM 23469 / PBi) (Borreliella bavariensis).